We begin with the raw amino-acid sequence, 89 residues long: uncharacterized protein (89 aa).

This sequence to M.jannaschii MJ1436.

This is an uncharacterized protein from Methanothermobacter thermautotrophicus (strain ATCC 29096 / DSM 1053 / JCM 10044 / NBRC 100330 / Delta H) (Methanobacterium thermoautotrophicum).